A 932-amino-acid polypeptide reads, in one-letter code: MGLTPMMRQYLEVKESCKDCILFFRLGDFYEMFFEDAKVASKELELVLTGRDCGLEERAPMCGIPYHAANTYVGRLVSAGYKIAICEQLEDPSASKGIVKRGIIKIITPGTYTDSSFLEENKNNYIMSFYLDDNMCAMSFADISTGEFNSTHSNFKEAVVLDEISKFAPREIVLEENIKESFIHTIKERFPNISISKIKEENFDYNIDNNLKEQFNNFNENEYETIVKKSANGLLYYIFHTQKNILSNINKIDYYSIVDYLTIDVNSRRNLEITENLREKTKKGSLLWVLDKTNTAMGGRQLRRWIEQPLINKNPIENRLNAVEELLNNISLQEDLKEDLKSIYDIERIVGKVASKSVNAKELISLKCSIGKVPYIKKYLSGFKSDLFLNMEQCIDTLEDIHKLLDKALLDNPSLSVKEGNIIKEGFNEEVDSLREAKSNGKKWIASLEQKEKEETGIKSLKVSYNKVFGYFIEITKANLNLVPEGRYIRKQTLSNAERYITPELKEMEEKILGAEEKLIDIEYKLFTEIRDFIEENIDRMQKTARIISDIDCLCSLATVALENNYIKPNINAKDEILIEEGRHPVVEKVIPKGEFISNDSLIDTKENQLILITGPNMAGKSTYMRQVALITIMAQIGSFVPAKKANISICDKIFTRIGASDDLAAGKSTFMVEMWEVSNILKNATSKSLVLLDEVGRGTSTYDGLSIAWSVIEYICNNKNLRCKTLFATHYHELTKLEDNIEGVKNYSVSVSELENEIVFLRKIIRGGADQSYGIEVAKLAGLPSPVINRAKEILQHIEGDKEENSLNIAPSKEYKSKDYIEVSKDTLNTKNNLGSEIKHDTLSETNTATIIEDESTKEHLSSNKKQINCRTNDEKSIKKEVAVDSFQINFEYIKIDKIIEEIKNIDILNMTPMEGFNKLYDIINKTKDID.

615-622 (GPNMAGKS) provides a ligand contact to ATP.

Belongs to the DNA mismatch repair MutS family.

This protein is involved in the repair of mismatches in DNA. It is possible that it carries out the mismatch recognition step. This protein has a weak ATPase activity. This is DNA mismatch repair protein MutS from Clostridium botulinum (strain Langeland / NCTC 10281 / Type F).